The sequence spans 216 residues: Sugar fermentation stimulation protein homolog (216 aa).

The protein belongs to the SfsA family.

In Thermoplasma volcanium (strain ATCC 51530 / DSM 4299 / JCM 9571 / NBRC 15438 / GSS1), this protein is Sugar fermentation stimulation protein homolog.